The sequence spans 175 residues: ATP-dependent protease subunit HslV (175 aa).

T2 is a catalytic residue. Na(+) is bound by residues A156, C159, and T162.

The protein belongs to the peptidase T1B family. HslV subfamily. In terms of assembly, a double ring-shaped homohexamer of HslV is capped on each side by a ring-shaped HslU homohexamer. The assembly of the HslU/HslV complex is dependent on binding of ATP.

It is found in the cytoplasm. The catalysed reaction is ATP-dependent cleavage of peptide bonds with broad specificity.. Allosterically activated by HslU binding. Functionally, protease subunit of a proteasome-like degradation complex believed to be a general protein degrading machinery. The protein is ATP-dependent protease subunit HslV of Rhizobium rhizogenes (strain K84 / ATCC BAA-868) (Agrobacterium radiobacter).